We begin with the raw amino-acid sequence, 209 residues long: MTTESQSAVKTILHVESSLFGEGGVSSQLSTELVTKLQNKYADVNAKVNTNVKIVKRNLAAEPIPHLDLATITAIGEGKPVIGDTLIQELKDADIVVLGVPMYNFGVPSGLKAWFDHIARAGSTFKYTETGPVGLLENKKVYVVTSRGGYHKDAASDVEVPFLKTFLGFLGLNDVEFIYAEGLNLSGKREQGLADASAKIAALVGEEAA.

FMN is bound by residues S18, 102–105 (MYNF), and 146–149 (SRGG).

The protein belongs to the azoreductase type 1 family. As to quaternary structure, homodimer. FMN is required as a cofactor.

The catalysed reaction is 2 a quinone + NADH + H(+) = 2 a 1,4-benzosemiquinone + NAD(+). The enzyme catalyses N,N-dimethyl-1,4-phenylenediamine + anthranilate + 2 NAD(+) = 2-(4-dimethylaminophenyl)diazenylbenzoate + 2 NADH + 2 H(+). Its function is as follows. Quinone reductase that provides resistance to thiol-specific stress caused by electrophilic quinones. In terms of biological role, also exhibits azoreductase activity. Catalyzes the reductive cleavage of the azo bond in aromatic azo compounds to the corresponding amines. This Saccharophagus degradans (strain 2-40 / ATCC 43961 / DSM 17024) protein is FMN-dependent NADH:quinone oxidoreductase.